The sequence spans 416 residues: Probable glucan 1,3-beta-glucosidase A (416 aa).

A signal peptide spans 1 to 22; that stretch reads MFVESAKKALLALSLLAASAQA. The N-linked (GlcNAc...) asparagine glycan is linked to Asn183. Glu210 serves as the catalytic Proton donor. 2 disulfides stabilise this stretch: Cys290–Cys415 and Cys316–Cys342. The active-site Nucleophile is Glu308.

This sequence belongs to the glycosyl hydrolase 5 (cellulase A) family. Monomer. Requires Mn(2+) as cofactor.

Its subcellular location is the secreted. It catalyses the reaction Successive hydrolysis of beta-D-glucose units from the non-reducing ends of (1-&gt;3)-beta-D-glucans, releasing alpha-glucose.. Its function is as follows. Beta-glucanases participate in the metabolism of beta-glucan, the main structural component of the cell wall. It could also function biosynthetically as a transglycosylase. The chain is Probable glucan 1,3-beta-glucosidase A (exgA) from Aspergillus niger (strain ATCC MYA-4892 / CBS 513.88 / FGSC A1513).